Consider the following 572-residue polypeptide: Glutathione hydrolase 1 (572 aa).

Residues 1–22 (MSLVRTVTIVLFIIAFLQNAAA) form the signal peptide. R99 is an L-glutamate binding site. N-linked (GlcNAc...) asparagine glycosylation is found at N171 and N222. Residue T368 is the Nucleophile of the active site. Residues T386, N388, E407, D410, 440–441 (SS), and 461–462 (GG) each bind L-glutamate. Residue N505 is glycosylated (N-linked (GlcNAc...) asparagine). The tract at residues 552 to 572 (GGRSELVAVSDPRKGGFPSGY) is disordered.

The protein belongs to the gamma-glutamyltransferase family. As to expression, expressed in embryo, roots and leaves. In mature plants, expression is restricted to vascular tissues of roots, leaves, flowers and siliques.

The protein resides in the secreted. It is found in the extracellular space. It localises to the apoplast. It carries out the reaction an N-terminal (5-L-glutamyl)-[peptide] + an alpha-amino acid = 5-L-glutamyl amino acid + an N-terminal L-alpha-aminoacyl-[peptide]. It catalyses the reaction glutathione + H2O = L-cysteinylglycine + L-glutamate. The enzyme catalyses an S-substituted glutathione + H2O = an S-substituted L-cysteinylglycine + L-glutamate. It functions in the pathway sulfur metabolism; glutathione metabolism. Its function is as follows. May play a role in preventing oxidative stress by metabolizing extracellular oxidized glutathione (GSSG). This chain is Glutathione hydrolase 1 (GGT1), found in Arabidopsis thaliana (Mouse-ear cress).